A 399-amino-acid chain; its full sequence is Dual-specificity RNA methyltransferase RlmN (399 aa).

The active-site Proton acceptor is the E120. Positions 126–367 (EEGRGTLCVS…SPVRTPRGRD (242 aa)) constitute a Radical SAM core domain. C133 and C372 are oxidised to a cystine. [4Fe-4S] cluster contacts are provided by C140, C144, and C147. S-adenosyl-L-methionine-binding positions include 198–199 (GE), S230, 252–254 (SLH), and N329. Catalysis depends on C372, which acts as the S-methylcysteine intermediate.

It belongs to the radical SAM superfamily. RlmN family. The cofactor is [4Fe-4S] cluster.

The protein resides in the cytoplasm. The catalysed reaction is adenosine(2503) in 23S rRNA + 2 reduced [2Fe-2S]-[ferredoxin] + 2 S-adenosyl-L-methionine = 2-methyladenosine(2503) in 23S rRNA + 5'-deoxyadenosine + L-methionine + 2 oxidized [2Fe-2S]-[ferredoxin] + S-adenosyl-L-homocysteine. It catalyses the reaction adenosine(37) in tRNA + 2 reduced [2Fe-2S]-[ferredoxin] + 2 S-adenosyl-L-methionine = 2-methyladenosine(37) in tRNA + 5'-deoxyadenosine + L-methionine + 2 oxidized [2Fe-2S]-[ferredoxin] + S-adenosyl-L-homocysteine. Specifically methylates position 2 of adenine 2503 in 23S rRNA and position 2 of adenine 37 in tRNAs. m2A2503 modification seems to play a crucial role in the proofreading step occurring at the peptidyl transferase center and thus would serve to optimize ribosomal fidelity. In Parvibaculum lavamentivorans (strain DS-1 / DSM 13023 / NCIMB 13966), this protein is Dual-specificity RNA methyltransferase RlmN.